A 210-amino-acid polypeptide reads, in one-letter code: Outer-membrane lipoprotein carrier protein (210 aa).

The N-terminal stretch at 1 to 22 (MRAFKWALAIGATLALPLTAQA) is a signal peptide.

This sequence belongs to the LolA family. Monomer.

Its subcellular location is the periplasm. Its function is as follows. Participates in the translocation of lipoproteins from the inner membrane to the outer membrane. Only forms a complex with a lipoprotein if the residue after the N-terminal Cys is not an aspartate (The Asp acts as a targeting signal to indicate that the lipoprotein should stay in the inner membrane). This is Outer-membrane lipoprotein carrier protein from Chromohalobacter salexigens (strain ATCC BAA-138 / DSM 3043 / CIP 106854 / NCIMB 13768 / 1H11).